Consider the following 246-residue polypeptide: Acetoacetate decarboxylase (246 aa).

Residue K116 is the Schiff-base intermediate with acetoacetate of the active site.

The protein belongs to the ADC family. Homododecamer.

The catalysed reaction is acetoacetate + H(+) = acetone + CO2. Its function is as follows. Catalyzes the conversion of acetoacetate to acetone and carbon dioxide. The chain is Acetoacetate decarboxylase from Chromobacterium violaceum (strain ATCC 12472 / DSM 30191 / JCM 1249 / CCUG 213 / NBRC 12614 / NCIMB 9131 / NCTC 9757 / MK).